A 359-amino-acid chain; its full sequence is Probable E3 ubiquitin-protein ligase LUL4 (359 aa).

The interval Met1–Pro35 is disordered. Gly2 carries the N-myristoyl glycine lipid modification. Positions Tyr23 to Pro35 are enriched in pro residues. The interval Phe148 to Gln267 is DAR2 domain. The segment at Cys302 to Arg341 adopts an RING-type zinc-finger fold.

Belongs to the RING-type zinc finger family. LOG2 subfamily.

The catalysed reaction is S-ubiquitinyl-[E2 ubiquitin-conjugating enzyme]-L-cysteine + [acceptor protein]-L-lysine = [E2 ubiquitin-conjugating enzyme]-L-cysteine + N(6)-ubiquitinyl-[acceptor protein]-L-lysine.. Its pathway is protein modification; protein ubiquitination. In terms of biological role, acts as an E3 ubiquitin-protein ligase, or as part of E3 complex, which accepts ubiquitin from specific E2 ubiquitin-conjugating enzymes and then transfers it to substrates (in vitro). This Arabidopsis thaliana (Mouse-ear cress) protein is Probable E3 ubiquitin-protein ligase LUL4 (LUL4).